Consider the following 324-residue polypeptide: Biotin synthase (324 aa).

Residues 37 to 264 (NEVQVAALMN…ASYVRLAAGR (228 aa)) enclose the Radical SAM core domain. [4Fe-4S] cluster is bound by residues C52, C56, and C59. Residues C96, C127, C187, and R259 each contribute to the [2Fe-2S] cluster site.

Belongs to the radical SAM superfamily. Biotin synthase family. As to quaternary structure, homodimer. [4Fe-4S] cluster serves as cofactor. It depends on [2Fe-2S] cluster as a cofactor.

It carries out the reaction (4R,5S)-dethiobiotin + (sulfur carrier)-SH + 2 reduced [2Fe-2S]-[ferredoxin] + 2 S-adenosyl-L-methionine = (sulfur carrier)-H + biotin + 2 5'-deoxyadenosine + 2 L-methionine + 2 oxidized [2Fe-2S]-[ferredoxin]. It functions in the pathway cofactor biosynthesis; biotin biosynthesis; biotin from 7,8-diaminononanoate: step 2/2. In terms of biological role, catalyzes the conversion of dethiobiotin (DTB) to biotin by the insertion of a sulfur atom into dethiobiotin via a radical-based mechanism. The sequence is that of Biotin synthase from Anaplasma marginale (strain Florida).